The chain runs to 88 residues: MKPVFVILFLTCIAFTYAESYEDVKEEIKNEVEREIFEDLEEESDVLDSNVREFNDAKPWRFRRAIQRVRWRKVAPYMPFVVKTVGKK.

The N-terminal stretch at 1 to 18 is a signal peptide; it reads MKPVFVILFLTCIAFTYA. Positions 19 to 57 are excised as a propeptide; the sequence is ESYEDVKEEIKNEVEREIFEDLEEESDVLDSNVREFNDA. The residue at position 85 (Val85) is a Valine amide.

Belongs to the arminin family. As to expression, expressed in entodermal epithelium along the body column.

It is found in the secreted. The protein resides in the target cell membrane. Functionally, antimicrobial peptide with a broad-spectrum antimicrobial activity. Keeps its antibacterial activity under a wide range of salt concentrations that mimic physiological conditions of human blood, which is surprising, since Hydra is an obligate freshwater animal with nearly no salt tolerance. Does not affect red blood cells. This is Arminin 1c from Hydra vulgaris (Hydra).